Consider the following 453-residue polypeptide: Gamma-glutamylpolyamine synthetase GlnA2 (453 aa).

Positions 15-100 (RDIRFVRLWF…MFCDILMPDG (86 aa)) constitute a GS beta-grasp domain. The 347-residue stretch at 107 to 453 (PRYVLKRALA…FELRKSLPVL (347 aa)) folds into the GS catalytic domain. Mg(2+) is bound by residues E130 and E132. E182 provides a ligand contact to ATP. 2 residues coordinate Mg(2+): E187 and E194. G239 is a binding site for L-glutamate. Mg(2+) is bound at residue H243. Residue 245–247 (HLS) coordinates ATP. Residues R296, E310, and R322 each contribute to the L-glutamate site. Residues R322 and R327 each contribute to the ATP site. Residue E342 participates in Mg(2+) binding. L-glutamate is bound at residue R344.

This sequence belongs to the glutamine synthetase family. The cofactor is Mg(2+).

The catalysed reaction is putrescine + L-glutamate + ATP = gamma-L-glutamylputrescine + ADP + phosphate + H(+). It carries out the reaction spermine + L-glutamate + ATP = gamma-L-glutamylspermine + ADP + phosphate + H(+). It catalyses the reaction spermidine + L-glutamate + ATP = gamma-L-glutamylspermidine + ADP + phosphate + H(+). The enzyme catalyses cadaverine + L-glutamate + ATP = gamma-L-glutamylcadaverine + ADP + phosphate + H(+). It participates in amine and polyamine degradation; putrescine degradation. The protein operates within amine and polyamine degradation; spermidine degradation. Its pathway is amine and polyamine degradation; spermine degradation. Its activity is regulated as follows. No effect on activity with glutamine synthetase (GS) inhibitor methionine sulfoximine (MSO). Its function is as follows. Involved in the catabolism of polyamines. Catalyzes the ATP-dependent gamma-glutamylation of polyamines. Substrates include putrescine, cadaverine, spermidine and spermine, with a preference for short-chain polyamine putrescine. No complementation of the L-glutamine auxotrophy of an E.coli glnA mutant. Together with GlnA3, enables survival of S.coelicolor under exposure to high local environmental polyamine concentrations, which is toxic to the cells. This Streptomyces coelicolor (strain ATCC BAA-471 / A3(2) / M145) protein is Gamma-glutamylpolyamine synthetase GlnA2.